The sequence spans 631 residues: tRNA uridine 5-carboxymethylaminomethyl modification enzyme MnmG (631 aa).

Residue 15-20 participates in FAD binding; the sequence is GAGHAG. Residues 214–233 form a disordered region; that stretch reads YSKTEEEPGDKEPRHFSFTS. Position 276 to 290 (276 to 290) interacts with NAD(+); it reads GPRYCPSIETKVVRF.

It belongs to the MnmG family. In terms of assembly, homodimer. Heterotetramer of two MnmE and two MnmG subunits. The cofactor is FAD.

The protein localises to the cytoplasm. Its function is as follows. NAD-binding protein involved in the addition of a carboxymethylaminomethyl (cmnm) group at the wobble position (U34) of certain tRNAs, forming tRNA-cmnm(5)s(2)U34. This is tRNA uridine 5-carboxymethylaminomethyl modification enzyme MnmG from Lactobacillus delbrueckii subsp. bulgaricus (strain ATCC 11842 / DSM 20081 / BCRC 10696 / JCM 1002 / NBRC 13953 / NCIMB 11778 / NCTC 12712 / WDCM 00102 / Lb 14).